The following is a 115-amino-acid chain: NADH-ubiquinone oxidoreductase chain 3 (115 aa).

Transmembrane regions (helical) follow at residues leucine 3–tryptophan 23, phenylalanine 55–leucine 75, and leucine 86–tryptophan 106.

It belongs to the complex I subunit 3 family. In terms of assembly, core subunit of respiratory chain NADH dehydrogenase (Complex I) which is composed of 45 different subunits. Interacts with TMEM186. Interacts with TMEM242.

It is found in the mitochondrion inner membrane. It carries out the reaction a ubiquinone + NADH + 5 H(+)(in) = a ubiquinol + NAD(+) + 4 H(+)(out). Its function is as follows. Core subunit of the mitochondrial membrane respiratory chain NADH dehydrogenase (Complex I) which catalyzes electron transfer from NADH through the respiratory chain, using ubiquinone as an electron acceptor. Essential for the catalytic activity of complex I. The chain is NADH-ubiquinone oxidoreductase chain 3 from Lemur catta (Ring-tailed lemur).